The sequence spans 259 residues: Type-2Aa cytolytic delta-endotoxin (259 aa).

It belongs to the cyt1/cyt2 endotoxin family. As to quaternary structure, homodimer (protoxin) and monomer (active toxin). Active after proteolytic processing.

Kills the larvae of dipteran insects by making pores in the epithelial cell membrane of the insect midgut. In Bacillus thuringiensis subsp. kyushuensis, this protein is Type-2Aa cytolytic delta-endotoxin (cyt2Aa1).